Here is a 461-residue protein sequence, read N- to C-terminus: Glycine--tRNA ligase (461 aa).

Substrate is bound by residues R100 and E174. Residues 206–208, 216–221, 290–291, and 334–337 each bind ATP; these read RNE, FRTREF, EL, and GVDR. 221-225 contacts substrate; sequence FEQME. 330–334 contributes to the substrate binding site; the sequence is EPSVG.

It belongs to the class-II aminoacyl-tRNA synthetase family. Homodimer.

The protein resides in the cytoplasm. It catalyses the reaction tRNA(Gly) + glycine + ATP = glycyl-tRNA(Gly) + AMP + diphosphate. Functionally, catalyzes the attachment of glycine to tRNA(Gly). This is Glycine--tRNA ligase from Caldanaerobacter subterraneus subsp. tengcongensis (strain DSM 15242 / JCM 11007 / NBRC 100824 / MB4) (Thermoanaerobacter tengcongensis).